Here is a 192-residue protein sequence, read N- to C-terminus: Mitochondrial import inner membrane translocase subunit TIM18 (192 aa).

The N-terminal 42 residues, 1 to 42 (MLLFPGLKPVLNASTVIVNPVRAVFPGLVLSTKRSFYSINRL), are a transit peptide targeting the mitochondrion. Residues 43–88 (NAENKINDIANTSKEASSSVQMFKPPEFSQFKDSYQKDYERIAKYT) are Mitochondrial matrix-facing. The helical transmembrane segment at 89–109 (LIPLTMVPFYASFTGGVINPL) threads the bilayer. At 110-113 (LDAS) the chain is on the mitochondrial intermembrane side. A helical transmembrane segment spans residues 114–134 (LSSIFLIYLQYGFTSCIIDYI). Residues 135 to 144 (PKEKYPRWHK) lie on the Mitochondrial matrix side of the membrane. Residues 145-165 (LALYCLYGGSMLSLYGIYELE) form a helical membrane-spanning segment. Over 166 to 192 (TKNNGFVDLVKKLWNENDDHLYIFGRN) the chain is Mitochondrial intermembrane.

It belongs to the CybS family. In terms of assembly, component of the TIM22 complex, whose core is composed of TIM18, TIM22 and TIM54, associated with the peripheral proteins MRS5/TIM12 and the 70 kDa heterohexamer composed of TIM9 and TIM10 (or TIM8 and TIM13).

The protein localises to the mitochondrion inner membrane. Component of the TIM22 complex, a complex that mediates the import and insertion of multi-pass transmembrane proteins into the mitochondrial inner membrane. The TIM22 complex forms a twin-pore translocase that uses the membrane potential as external driving force. Its role in the complex is unclear but it may be involved in the assembly and stabilization of the TIM22 complex. The chain is Mitochondrial import inner membrane translocase subunit TIM18 (TIM18) from Saccharomyces cerevisiae (strain ATCC 204508 / S288c) (Baker's yeast).